Reading from the N-terminus, the 158-residue chain is Cyclic pyranopterin monophosphate synthase (158 aa).

Residues 74–76 (MCH) and 112–113 (ME) contribute to the substrate site. The active site involves Asp127.

Belongs to the MoaC family. Homohexamer; trimer of dimers.

The enzyme catalyses (8S)-3',8-cyclo-7,8-dihydroguanosine 5'-triphosphate = cyclic pyranopterin phosphate + diphosphate. Its pathway is cofactor biosynthesis; molybdopterin biosynthesis. Catalyzes the conversion of (8S)-3',8-cyclo-7,8-dihydroguanosine 5'-triphosphate to cyclic pyranopterin monophosphate (cPMP). In Helicobacter pylori (strain P12), this protein is Cyclic pyranopterin monophosphate synthase.